A 564-amino-acid chain; its full sequence is Glutamyl-tRNA(Gln) amidotransferase subunit B, mitochondrial (564 aa).

The N-terminal 88 residues, 1-88 (MIRQCVSHRG…DTDAKLFSRA (88 aa)), are a transit peptide targeting the mitochondrion. Residues 26–63 (PFHHPSPRPLGRKNWSTSDEAKSKRAAMRKGGAPPPEH) form a disordered region.

Belongs to the GatB/GatE family. GatB subfamily. As to quaternary structure, subunit of the heterotrimeric GatCAB amidotransferase (AdT) complex, composed of A, B and C subunits.

It localises to the mitochondrion. The catalysed reaction is L-glutamyl-tRNA(Gln) + L-glutamine + ATP + H2O = L-glutaminyl-tRNA(Gln) + L-glutamate + ADP + phosphate + H(+). Its function is as follows. Allows the formation of correctly charged Gln-tRNA(Gln) through the transamidation of misacylated Glu-tRNA(Gln) in the mitochondria. The reaction takes place in the presence of glutamine and ATP through an activated gamma-phospho-Glu-tRNA(Gln). This Ajellomyces capsulatus (strain G186AR / H82 / ATCC MYA-2454 / RMSCC 2432) (Darling's disease fungus) protein is Glutamyl-tRNA(Gln) amidotransferase subunit B, mitochondrial.